The sequence spans 310 residues: Methionyl-tRNA formyltransferase (310 aa).

(6S)-5,6,7,8-tetrahydrofolate is bound at residue 112-115 (SLLP).

This sequence belongs to the Fmt family.

It carries out the reaction L-methionyl-tRNA(fMet) + (6R)-10-formyltetrahydrofolate = N-formyl-L-methionyl-tRNA(fMet) + (6S)-5,6,7,8-tetrahydrofolate + H(+). Functionally, attaches a formyl group to the free amino group of methionyl-tRNA(fMet). The formyl group appears to play a dual role in the initiator identity of N-formylmethionyl-tRNA by promoting its recognition by IF2 and preventing the misappropriation of this tRNA by the elongation apparatus. In Pelagibacter ubique (strain HTCC1062), this protein is Methionyl-tRNA formyltransferase.